Consider the following 239-residue polypeptide: 1-(5-phosphoribosyl)-5-[(5-phosphoribosylamino)methylideneamino] imidazole-4-carboxamide isomerase (239 aa).

Asp-12 acts as the Proton acceptor in catalysis. The active-site Proton donor is the Asp-133.

Belongs to the HisA/HisF family.

The protein localises to the cytoplasm. It carries out the reaction 1-(5-phospho-beta-D-ribosyl)-5-[(5-phospho-beta-D-ribosylamino)methylideneamino]imidazole-4-carboxamide = 5-[(5-phospho-1-deoxy-D-ribulos-1-ylimino)methylamino]-1-(5-phospho-beta-D-ribosyl)imidazole-4-carboxamide. Its pathway is amino-acid biosynthesis; L-histidine biosynthesis; L-histidine from 5-phospho-alpha-D-ribose 1-diphosphate: step 4/9. This Sulfurihydrogenibium sp. (strain YO3AOP1) protein is 1-(5-phosphoribosyl)-5-[(5-phosphoribosylamino)methylideneamino] imidazole-4-carboxamide isomerase.